Reading from the N-terminus, the 307-residue chain is MPSSHGDLDRQIAQLRECKHLAEGEVRALCEQAKAILMEEWNVQPVRCPVTVCGDIHGQFYDLIELFRIGGEAPDTNYLFMGDYVDRGYYSVETVSLLVALKVRYRDRITILRGNHESRQITQVYGFYDECLRKYGNANVWKYFTDLFDYLPLTALIENQVFCLHGGLSPSLDTLDNIRALDRIQEVPHEGPMCDLLWSDPDDRCGWGISPRGAGYTFGQDIAQQFNHTNGLSLISRAHQLVMEGFNWCQDKNVVTVFSAPNYCYRCGNMAAILEIGENMDQNFLQFDPAPRQIEPDTTRKTPDYFL.

The Mn(2+) site is built by D55, H57, D83, and N115. H116 acts as the Proton donor in catalysis. Mn(2+) contacts are provided by H165 and H239.

Belongs to the PPP phosphatase family. PP-2A subfamily. The cofactor is Mn(2+).

It is found in the cytoplasm. The catalysed reaction is O-phospho-L-seryl-[protein] + H2O = L-seryl-[protein] + phosphate. The enzyme catalyses O-phospho-L-threonyl-[protein] + H2O = L-threonyl-[protein] + phosphate. This is Serine/threonine-protein phosphatase PP2A-3 catalytic subunit (PP2A3) from Oryza sativa subsp. indica (Rice).